The primary structure comprises 512 residues: Probable pectinesterase/pectinesterase inhibitor 54 (512 aa).

The signal sequence occupies residues 1–24 (MGVIDMVLFWVLLVNALLIVDASS). The tract at residues 29 to 193 (FAYQNEMQRH…SRLVSNSLTL (165 aa)) is pectinesterase inhibitor 54. Asparagine 71 and asparagine 131 each carry an N-linked (GlcNAc...) asparagine glycan. The segment at 229–496 (HVVVAKDGSG…FSVVKRRNGE (268 aa)) is pectinesterase 54. Residue glutamine 302 participates in substrate binding. Residue aspartate 325 is the Proton donor; for pectinesterase activity of the active site. Cysteines 339 and 359 form a disulfide. Catalysis depends on aspartate 346, which acts as the Nucleophile; for pectinesterase activity. The substrate site is built by arginine 415 and tryptophan 417.

The protein in the N-terminal section; belongs to the PMEI family. In the C-terminal section; belongs to the pectinesterase family. As to expression, expressed in siliques.

It is found in the secreted. The protein resides in the cell wall. The catalysed reaction is [(1-&gt;4)-alpha-D-galacturonosyl methyl ester](n) + n H2O = [(1-&gt;4)-alpha-D-galacturonosyl](n) + n methanol + n H(+). It functions in the pathway glycan metabolism; pectin degradation; 2-dehydro-3-deoxy-D-gluconate from pectin: step 1/5. Functionally, acts in the modification of cell walls via demethylesterification of cell wall pectin. The protein is Probable pectinesterase/pectinesterase inhibitor 54 (PME54) of Arabidopsis thaliana (Mouse-ear cress).